The following is a 101-amino-acid chain: NADH-quinone oxidoreductase subunit K (101 aa).

3 helical membrane passes run 4–24 (LAHFLVLGAILFAISIVGIFL), 30–50 (IVLLMAIELMLLAVNMNFVAF), and 61–81 (VFVFFILTVAAAESAIGLAIL).

Belongs to the complex I subunit 4L family. In terms of assembly, NDH-1 is composed of 14 different subunits. Subunits NuoA, H, J, K, L, M, N constitute the membrane sector of the complex.

It localises to the cell inner membrane. The enzyme catalyses a quinone + NADH + 5 H(+)(in) = a quinol + NAD(+) + 4 H(+)(out). Functionally, NDH-1 shuttles electrons from NADH, via FMN and iron-sulfur (Fe-S) centers, to quinones in the respiratory chain. The immediate electron acceptor for the enzyme in this species is believed to be ubiquinone. Couples the redox reaction to proton translocation (for every two electrons transferred, four hydrogen ions are translocated across the cytoplasmic membrane), and thus conserves the redox energy in a proton gradient. The protein is NADH-quinone oxidoreductase subunit K of Cupriavidus pinatubonensis (strain JMP 134 / LMG 1197) (Cupriavidus necator (strain JMP 134)).